Consider the following 155-residue polypeptide: MAKGEGHILAQNKKARHDYHIVETVEAGIVLTGTEIKSVRATRIQLKDGFAQIKNGEAWLVNVHIAPFEQGNIWNADPERTRKLLLKKREITHLANELKGTGMTLVPLKVYLKDGFAKVLIGLAKGKHDYDKRETIKRRDQERDIKKQMKHYNAR.

The protein belongs to the SmpB family.

It localises to the cytoplasm. In terms of biological role, required for rescue of stalled ribosomes mediated by trans-translation. Binds to transfer-messenger RNA (tmRNA), required for stable association of tmRNA with ribosomes. tmRNA and SmpB together mimic tRNA shape, replacing the anticodon stem-loop with SmpB. tmRNA is encoded by the ssrA gene; the 2 termini fold to resemble tRNA(Ala) and it encodes a 'tag peptide', a short internal open reading frame. During trans-translation Ala-aminoacylated tmRNA acts like a tRNA, entering the A-site of stalled ribosomes, displacing the stalled mRNA. The ribosome then switches to translate the ORF on the tmRNA; the nascent peptide is terminated with the 'tag peptide' encoded by the tmRNA and targeted for degradation. The ribosome is freed to recommence translation, which seems to be the essential function of trans-translation. The polypeptide is SsrA-binding protein (Streptococcus pyogenes serotype M5 (strain Manfredo)).